The following is a 97-amino-acid chain: Small integral membrane protein 8 (97 aa).

The segment at 1–24 (MSSAPEPPTFKKEPPKEKEFQSPG) is disordered. Residues 9–20 (TFKKEPPKEKEF) show a composition bias toward basic and acidic residues. A helical transmembrane segment spans residues 48 to 70 (PVMAFGLVTLSLCVAYIGYLHAI).

Belongs to the SMIM8 family.

Its subcellular location is the membrane. The chain is Small integral membrane protein 8 (SMIM8) from Homo sapiens (Human).